A 252-amino-acid chain; its full sequence is 5'-nucleotidase SurE (252 aa).

Positions 8, 9, 39, and 95 each coordinate a divalent metal cation.

It belongs to the SurE nucleotidase family. A divalent metal cation is required as a cofactor.

The protein localises to the cytoplasm. The enzyme catalyses a ribonucleoside 5'-phosphate + H2O = a ribonucleoside + phosphate. In terms of biological role, nucleotidase that shows phosphatase activity on nucleoside 5'-monophosphates. The sequence is that of 5'-nucleotidase SurE from Clostridium botulinum (strain Okra / Type B1).